We begin with the raw amino-acid sequence, 115 residues long: Ribonuclease P protein component (115 aa).

This sequence belongs to the RnpA family. As to quaternary structure, consists of a catalytic RNA component (M1 or rnpB) and a protein subunit.

The enzyme catalyses Endonucleolytic cleavage of RNA, removing 5'-extranucleotides from tRNA precursor.. Its function is as follows. RNaseP catalyzes the removal of the 5'-leader sequence from pre-tRNA to produce the mature 5'-terminus. It can also cleave other RNA substrates such as 4.5S RNA. The protein component plays an auxiliary but essential role in vivo by binding to the 5'-leader sequence and broadening the substrate specificity of the ribozyme. This is Ribonuclease P protein component from Baumannia cicadellinicola subsp. Homalodisca coagulata.